Here is a 332-residue protein sequence, read N- to C-terminus: Fructose-1,6-bisphosphatase class 1 (332 aa).

Mg(2+) contacts are provided by E89, D110, L112, and D113. Substrate contacts are provided by residues D113 to S116, N206, Y239, Y257 to Y259, and K269. E275 contributes to the Mg(2+) binding site.

It belongs to the FBPase class 1 family. Homotetramer. It depends on Mg(2+) as a cofactor.

The protein localises to the cytoplasm. The enzyme catalyses beta-D-fructose 1,6-bisphosphate + H2O = beta-D-fructose 6-phosphate + phosphate. Its pathway is carbohydrate biosynthesis; gluconeogenesis. The sequence is that of Fructose-1,6-bisphosphatase class 1 from Salmonella arizonae (strain ATCC BAA-731 / CDC346-86 / RSK2980).